Consider the following 238-residue polypeptide: Ubiquinone biosynthesis O-methyltransferase (238 aa).

Residues R38, G57, D78, and L124 each contribute to the S-adenosyl-L-methionine site.

Belongs to the methyltransferase superfamily. UbiG/COQ3 family.

It carries out the reaction a 3-demethylubiquinol + S-adenosyl-L-methionine = a ubiquinol + S-adenosyl-L-homocysteine + H(+). The enzyme catalyses a 3-(all-trans-polyprenyl)benzene-1,2-diol + S-adenosyl-L-methionine = a 2-methoxy-6-(all-trans-polyprenyl)phenol + S-adenosyl-L-homocysteine + H(+). Its pathway is cofactor biosynthesis; ubiquinone biosynthesis. In terms of biological role, O-methyltransferase that catalyzes the 2 O-methylation steps in the ubiquinone biosynthetic pathway. The polypeptide is Ubiquinone biosynthesis O-methyltransferase (Marinobacter nauticus (strain ATCC 700491 / DSM 11845 / VT8) (Marinobacter aquaeolei)).